The sequence spans 494 residues: Cytochrome P450 monooxygenase acrF (494 aa).

Position 420 (C420) interacts with heme.

This sequence belongs to the cytochrome P450 family. Heme serves as cofactor.

The protein operates within secondary metabolite biosynthesis. Its function is as follows. Cytochrome P450 monooxygenase; part of the cluster that mediates the biosynthesis of acurin A, a highly reduced polyketide coupled to a serine via a peptide bond. The activities of the highly reducing polyketide synthase acrA and the nonribosomal peptide synthetase acrB are collectively responsible for the synthesis of the acurin A core structure with a heptaketide backbone produced by acrA covalently fused to a L-serine by acrB. After the formation of the PK-NRP hybrid product, it is detached from acrB by reductive release to set up the formation of the lactam ring by aldol condensation. The hydrolyase acrC then catalyzes water loss to generate a double bond in the ring. This double bond is probably reduced, which is followed by three oxidations at C-22 to generate the carboxylic acid moiety, involving probably the FAD-binding monooxygenase acrE and the cytochrome P450 monooxygenases acrD and acrF. Finally, a last methylation step performed by the O-methyltransferase acrG leads to the production of acurin A. This Aspergillus aculeatus (strain ATCC 16872 / CBS 172.66 / WB 5094) protein is Cytochrome P450 monooxygenase acrF.